The sequence spans 149 residues: SsrA-binding protein (149 aa).

It belongs to the SmpB family.

Its subcellular location is the cytoplasm. In terms of biological role, required for rescue of stalled ribosomes mediated by trans-translation. Binds to transfer-messenger RNA (tmRNA), required for stable association of tmRNA with ribosomes. tmRNA and SmpB together mimic tRNA shape, replacing the anticodon stem-loop with SmpB. tmRNA is encoded by the ssrA gene; the 2 termini fold to resemble tRNA(Ala) and it encodes a 'tag peptide', a short internal open reading frame. During trans-translation Ala-aminoacylated tmRNA acts like a tRNA, entering the A-site of stalled ribosomes, displacing the stalled mRNA. The ribosome then switches to translate the ORF on the tmRNA; the nascent peptide is terminated with the 'tag peptide' encoded by the tmRNA and targeted for degradation. The ribosome is freed to recommence translation, which seems to be the essential function of trans-translation. This Acholeplasma laidlawii (strain PG-8A) protein is SsrA-binding protein.